The primary structure comprises 274 residues: Large ribosomal subunit protein uL2 (274 aa).

The segment at 220-259 is disordered; that stretch reads VRGAAMNPRDHPHGGGEGRAPRGMSTPKTKWGKPARGVKT. The span at 227-239 shows a compositional bias: basic and acidic residues; the sequence is PRDHPHGGGEGRA. Residues 249-259 are compositionally biased toward basic residues; sequence KWGKPARGVKT.

The protein belongs to the universal ribosomal protein uL2 family. As to quaternary structure, part of the 50S ribosomal subunit. Forms a bridge to the 30S subunit in the 70S ribosome.

Functionally, one of the primary rRNA binding proteins. Required for association of the 30S and 50S subunits to form the 70S ribosome, for tRNA binding and peptide bond formation. It has been suggested to have peptidyltransferase activity; this is somewhat controversial. Makes several contacts with the 16S rRNA in the 70S ribosome. The polypeptide is Large ribosomal subunit protein uL2 (Chloroflexus aggregans (strain MD-66 / DSM 9485)).